The chain runs to 1215 residues: Endoplasmic reticulum transmembrane helix translocase (1215 aa).

The Cytoplasmic portion of the chain corresponds to 1–27 (MTKKSFVSSPIVRDSTLLVPKSLIAKP). Residues 28-43 (YVLPFFPLYATFAQLY) traverse the membrane as a helical segment. Topologically, residues 44-56 (FQQYDRYIKGPEW) are lumenal. Residues 57-76 (TFVYLGTLVSLNILVMLMPA) form a helical membrane-spanning segment. Residues 77-188 (WNVKIKAKFN…ENSFDIPIPT (112 aa)) lie on the Cytoplasmic side of the membrane. The interval 156–185 (KIGDFQKCKGHSGDLTHLKRLYGENSFDIP) is A-domain; part 1. Residues 189 to 216 (FMELFKEHAVAPLFVFQVFCVALWLLDE) traverse the membrane as a helical segment. F217 is a topological domain (lumenal). A helical transmembrane segment spans residues 218 to 246 (WYYSLFNLFMIISMEAAAVFQRLTALKEF). The Cytoplasmic portion of the chain corresponds to 247-395 (RTMGIKPYTI…IYSAERVSVD (149 aa)). Residues 250 to 390 (GIKPYTINVF…LVRVMIYSAE (141 aa)) are A-domain; part 2. The residue at position 324 (S324) is a Phosphoserine. Residues 396–425 (NKEALMFILFLLIFAVIASWYVWVEGTKMG) traverse the membrane as a helical segment. Over 426 to 427 (RI) the chain is Lumenal. Helical transmembrane passes span 428–442 (QSKL…ITSV) and 446–464 (ELPM…ALAK). Residues 465-971 (FYVYCTEPFR…APFTSKLANV (507 aa)) lie on the Cytoplasmic side of the membrane. The P-domain; part 1 stretch occupies residues 466–495 (YVYCTEPFRIPFAGRIDVCCFDKTGTLTGE). D487 (4-aspartylphosphate intermediate) is an active-site residue. Residues D487 and T489 each contribute to the Mg(2+) site. ATP-binding positions include 487–489 (DKT), F582, R634, D699, and 816–820 (DGTND). An N-domain region spans residues 497 to 674 (LVFEGLAGIS…FNGFLIFHCP (178 aa)). Residues 677 to 837 (DDAIETIKML…HVGIALLNGT (161 aa)) form a P-domain; part 2 region. Mg(2+) is bound at residue D816. The tract at residues 838–953 (EEGLKKLGEQ…DAQGDEAPAL (116 aa)) is arm-like. At S936 the chain carries Phosphoserine. The segment at 954–969 (KLGDASCAAPFTSKLA) is P-domain; part 3. Residues 972 to 1011 (SAVTNIIRQGRCALVNTIQMYKILALNCLISAYSLSIIYM) form a helical membrane-spanning segment. Topologically, residues 1012-1017 (AGVKFG) are lumenal. The chain crosses the membrane as a helical span at residues 1018–1035 (DGQATVSGLLLSVCFLSI). Topologically, residues 1036–1055 (SRGKPLEKLSKQRPQSGIFN) are cytoplasmic. The helical transmembrane segment at 1056–1084 (VYIMGSILSQFAVHIATLVYITTEIYKLE) threads the bilayer. Residues 1085-1099 (PREPQVDLEKEFAPS) are Lumenal-facing. A helical transmembrane segment spans residues 1100–1121 (LLNTGIFIIQLVQQVSTFAVNY). At 1122–1133 (QGEPFRENIRSN) the chain is on the cytoplasmic side. Residues 1134–1151 (KGMYYGLLGVTGLALASA) form a helical membrane-spanning segment. At 1152–1168 (TEFLPELNEAMKFVPMT) the chain is on the lumenal side. Residues 1169–1197 (DDFKIKLTLTLLLDFFGSWGVEHFFKFFF) traverse the membrane as a helical segment. Over 1198 to 1215 (MDDKPSDISVQQVKIASK) the chain is Cytoplasmic.

Belongs to the cation transport ATPase (P-type) (TC 3.A.3) family. Type V subfamily. The cofactor is Mg(2+).

The protein resides in the endoplasmic reticulum membrane. It catalyses the reaction [protein]-with a C-terminal TM segment(out) + ATP + H2O = [protein]-with a C-terminal TM segment(in) + ADP + phosphate + H(+). The ATPase activity is stimulated by phosphatidylinositol 4-phosphate (PI4P). Its function is as follows. Endoplasmic reticulum translocase required to remove mitochondrial transmembrane proteins mistargeted to the endoplasmic reticulum. Acts as a dislocase that mediates the ATP-dependent extraction of mislocalized mitochondrial transmembrane proteins from the endoplasmic reticulum membrane. Specifically binds mitochondrial tail-anchored transmembrane proteins: has an atypically large substrate-binding pocket that recognizes and binds moderately hydrophobic transmembranes with short hydrophilic lumenal domains. The polypeptide is Endoplasmic reticulum transmembrane helix translocase (Saccharomyces cerevisiae (strain ATCC 204508 / S288c) (Baker's yeast)).